We begin with the raw amino-acid sequence, 58 residues long: Bestoxin (58 aa).

The region spanning 3-58 is the LCN-type CS-alpha/beta domain; the sequence is VPGNYPLDKDGNTYTCLELGENKDCQKVCKLHGVQYGYCYAFSCWCKEYLDDKDSV. 3 cysteine pairs are disulfide-bonded: Cys18–Cys41, Cys27–Cys46, and Cys31–Cys48.

Expressed by the venom gland.

The protein localises to the secreted. Beta toxins bind voltage-independently at site-4 of sodium channels (Nav) and shift the voltage of activation toward more negative potentials thereby affecting sodium channel activation and promoting spontaneous and repetitive firing. In mice, causes intense writhing. This chain is Bestoxin, found in Parabuthus transvaalicus (Transvaal thick-tailed scorpion).